A 458-amino-acid polypeptide reads, in one-letter code: UDP-N-acetylmuramate--L-alanine ligase (458 aa).

Position 115–121 (115–121 (GSHGKTT)) interacts with ATP.

The protein belongs to the MurCDEF family.

Its subcellular location is the cytoplasm. The enzyme catalyses UDP-N-acetyl-alpha-D-muramate + L-alanine + ATP = UDP-N-acetyl-alpha-D-muramoyl-L-alanine + ADP + phosphate + H(+). It participates in cell wall biogenesis; peptidoglycan biosynthesis. In terms of biological role, cell wall formation. This chain is UDP-N-acetylmuramate--L-alanine ligase, found in Anaeromyxobacter dehalogenans (strain 2CP-C).